Consider the following 90-residue polypeptide: Phosphoribosyl-ATP pyrophosphatase (90 aa).

It belongs to the PRA-PH family.

The protein resides in the cytoplasm. It carries out the reaction 1-(5-phospho-beta-D-ribosyl)-ATP + H2O = 1-(5-phospho-beta-D-ribosyl)-5'-AMP + diphosphate + H(+). It functions in the pathway amino-acid biosynthesis; L-histidine biosynthesis; L-histidine from 5-phospho-alpha-D-ribose 1-diphosphate: step 2/9. The polypeptide is Phosphoribosyl-ATP pyrophosphatase (Streptomyces griseus subsp. griseus (strain JCM 4626 / CBS 651.72 / NBRC 13350 / KCC S-0626 / ISP 5235)).